The primary structure comprises 400 residues: Subtilisin-like protease 7 (400 aa).

A signal peptide spans 1 to 20 (MGFITKAIPLALAAASVING). Positions 21–119 (AEIMETRAGV…IERDARVQIN (99 aa)) are excised as a propeptide. Positions 36-118 (KYIVVMNDGM…YIERDARVQI (83 aa)) constitute an Inhibitor I9 domain. N-linked (GlcNAc...) asparagine glycosylation is present at asparagine 58. Residues 129–400 (SWGLARVGSK…SKLINNGSGM (272 aa)) enclose the Peptidase S8 domain. Residues aspartate 161 and histidine 192 each act as charge relay system in the active site. 2 N-linked (GlcNAc...) asparagine glycosylation sites follow: asparagine 222 and asparagine 252. The active-site Charge relay system is the serine 346. A glycan (N-linked (GlcNAc...) asparagine) is linked at asparagine 396.

The protein belongs to the peptidase S8 family.

It localises to the secreted. Functionally, secreted subtilisin-like serine protease with keratinolytic activity that contributes to pathogenicity. The sequence is that of Subtilisin-like protease 7 (SUB7) from Arthroderma benhamiae (Trichophyton mentagrophytes).